The sequence spans 230 residues: Cytochrome b6-f complex iron-sulfur subunit, chloroplastic (230 aa).

The N-terminal 51 residues, 1–51 (MASFTLSSATPSQLCSSKNGMFAPSLALAKAGRVNVLISKERIRGMKLTCQ), are a transit peptide targeting the chloroplast. The helical transmembrane segment at 73-93 (LLGALSLPTGYMLLPYASFFV) threads the bilayer. Residues 116-212 (AAEWLKTHAP…CDVDDGKVVF (97 aa)) enclose the Rieske domain. [2Fe-2S] cluster contacts are provided by cysteine 158, histidine 160, cysteine 176, and histidine 179. Cysteine 163 and cysteine 178 are disulfide-bonded.

The protein belongs to the Rieske iron-sulfur protein family. The 4 large subunits of the cytochrome b6-f complex are cytochrome b6, subunit IV (17 kDa polypeptide, petD), cytochrome f and the Rieske protein, while the 4 small subunits are petG, petL, petM and petN. The complex functions as a dimer. It depends on [2Fe-2S] cluster as a cofactor.

Its subcellular location is the plastid. It localises to the chloroplast thylakoid membrane. The enzyme catalyses 2 oxidized [plastocyanin] + a plastoquinol + 2 H(+)(in) = 2 reduced [plastocyanin] + a plastoquinone + 4 H(+)(out). Its function is as follows. Component of the cytochrome b6-f complex, which mediates electron transfer between photosystem II (PSII) and photosystem I (PSI), cyclic electron flow around PSI, and state transitions. This is Cytochrome b6-f complex iron-sulfur subunit, chloroplastic (petC) from Spinacia oleracea (Spinach).